The chain runs to 348 residues: Selenide, water dikinase (348 aa).

Cys-17 is a catalytic residue. ATP contacts are provided by residues Lys-20 and 48–50 (TRD). Mg(2+) is bound at residue Asp-51. Residues Asp-68, Asp-91, and 139–141 (GHS) each bind ATP. Position 91 (Asp-91) interacts with Mg(2+). Position 227 (Asp-227) interacts with Mg(2+).

Belongs to the selenophosphate synthase 1 family. Class I subfamily. Homodimer. Mg(2+) is required as a cofactor.

The enzyme catalyses hydrogenselenide + ATP + H2O = selenophosphate + AMP + phosphate + 2 H(+). In terms of biological role, synthesizes selenophosphate from selenide and ATP. In Yersinia pestis, this protein is Selenide, water dikinase.